A 479-amino-acid chain; its full sequence is Nucleoside-diphosphatase uda-1 (479 aa).

Residues 1-7 (MLFPAFS) are Cytoplasmic-facing. The chain crosses the membrane as a helical; Signal-anchor for type II membrane protein span at residues 8–24 (ILLISFFSLLSVVTTKT). Topologically, residues 25–479 (QYWCHGDGVL…VLSYFNIISV (455 aa)) are lumenal. Glu-171 (proton acceptor) is an active-site residue. 2 N-linked (GlcNAc...) asparagine glycosylation sites follow: Asn-300 and Asn-452.

The protein belongs to the GDA1/CD39 NTPase family. The cofactor is Ca(2+). Mg(2+) is required as a cofactor. Mn(2+) serves as cofactor.

The protein localises to the endomembrane system. It carries out the reaction a ribonucleoside 5'-diphosphate + H2O = a ribonucleoside 5'-phosphate + phosphate + H(+). Hydrolyzes UDP and GDP but not any other nucleoside di-, mono- or triphosphates. May promote reglycosylation reactions involved in glycoproteins folding and quality control in the endoplasmic reticulum. The protein is Nucleoside-diphosphatase uda-1 (uda-1) of Caenorhabditis elegans.